The primary structure comprises 205 residues: Inosine triphosphate pyrophosphatase (205 aa).

20-25 (TGNAKK) serves as a coordination point for ITP. Glu-48 lines the Mg(2+) pocket. ITP contacts are provided by residues Lys-60, 76 to 77 (DT), Lys-93, 152 to 155 (FGWD), Lys-175, and 180 to 181 (HR).

The protein belongs to the HAM1 NTPase family. Homodimer. Mg(2+) serves as cofactor. Requires Mn(2+) as cofactor.

The protein localises to the cytoplasm. The enzyme catalyses ITP + H2O = IMP + diphosphate + H(+). It carries out the reaction dITP + H2O = dIMP + diphosphate + H(+). The catalysed reaction is XTP + H2O = XMP + diphosphate + H(+). Pyrophosphatase that hydrolyzes non-canonical purine nucleotides such as inosine triphosphate (ITP), deoxyinosine triphosphate (dITP) or xanthosine 5'-triphosphate (XTP) to their respective monophosphate derivatives. The enzyme does not distinguish between the deoxy- and ribose forms. Probably excludes non-canonical purines from RNA and DNA precursor pools, thus preventing their incorporation into RNA and DNA and avoiding chromosomal lesions. The protein is Inosine triphosphate pyrophosphatase of Oryza sativa subsp. japonica (Rice).